A 212-amino-acid chain; its full sequence is Large ribosomal subunit protein uL3 (212 aa).

The residue at position 153 (Gln153) is an N5-methylglutamine.

Belongs to the universal ribosomal protein uL3 family. Part of the 50S ribosomal subunit. Forms a cluster with proteins L14 and L19. In terms of processing, methylated by PrmB.

Its function is as follows. One of the primary rRNA binding proteins, it binds directly near the 3'-end of the 23S rRNA, where it nucleates assembly of the 50S subunit. The protein is Large ribosomal subunit protein uL3 of Shewanella halifaxensis (strain HAW-EB4).